We begin with the raw amino-acid sequence, 496 residues long: Glutamyl-tRNA(Gln) amidotransferase subunit A (496 aa).

Active-site charge relay system residues include lysine 75 and serine 150. Residue serine 174 is the Acyl-ester intermediate of the active site.

This sequence belongs to the amidase family. GatA subfamily. In terms of assembly, heterotrimer of A, B and C subunits.

The enzyme catalyses L-glutamyl-tRNA(Gln) + L-glutamine + ATP + H2O = L-glutaminyl-tRNA(Gln) + L-glutamate + ADP + phosphate + H(+). Its function is as follows. Allows the formation of correctly charged Gln-tRNA(Gln) through the transamidation of misacylated Glu-tRNA(Gln) in organisms which lack glutaminyl-tRNA synthetase. The reaction takes place in the presence of glutamine and ATP through an activated gamma-phospho-Glu-tRNA(Gln). The sequence is that of Glutamyl-tRNA(Gln) amidotransferase subunit A from Burkholderia vietnamiensis (strain G4 / LMG 22486) (Burkholderia cepacia (strain R1808)).